We begin with the raw amino-acid sequence, 161 residues long: Ribosome maturation factor RimP (161 aa).

It belongs to the RimP family.

Its subcellular location is the cytoplasm. Its function is as follows. Required for maturation of 30S ribosomal subunits. This Rickettsia africae (strain ESF-5) protein is Ribosome maturation factor RimP.